We begin with the raw amino-acid sequence, 386 residues long: Copper-containing nitrite reductase (386 aa).

The signal sequence occupies residues 1-18 (MKRQALAAIIASMFALAA). Cys-19 carries the N-palmitoyl cysteine lipid modification. Cys-19 carries S-diacylglycerol cysteine lipidation. Plastocyanin-like domains lie at 97-191 (WTFD…ILVE) and 241-342 (GHVG…LKVE). Cu cation-binding residues include His-130, His-135, His-170, Cys-171, His-179, and Met-184. Residue His-135 coordinates substrate. His-276 is a binding site for substrate. His-325 is a binding site for Cu cation. Positions 363 to 386 (GAAPAASAPAASAPAASAPAKSDY) are disordered. Residues 364 to 386 (AAPAASAPAASAPAASAPAKSDY) show a composition bias toward low complexity. A run of 3 repeats spans residues 367–371 (AASAP), 372–376 (AASAP), and 377–381 (AASAP). Residues 367–381 (AASAPAASAPAASAP) are 3 X 5 AA tandem repeats of A-A-S-A-P.

It belongs to the multicopper oxidase family. As to quaternary structure, homotrimer. Cu(+) serves as cofactor. Requires Cu(2+) as cofactor.

The protein localises to the cell outer membrane. It carries out the reaction nitric oxide + Fe(III)-[cytochrome c] + H2O = Fe(II)-[cytochrome c] + nitrite + 2 H(+). Catalyzes the reduction of nitrite to nitric oxide (NO). It could be essential for growth and survival in oxygen-depleted environments. The protein is Copper-containing nitrite reductase (aniA) of Neisseria meningitidis serogroup A / serotype 4A (strain DSM 15465 / Z2491).